The following is a 383-amino-acid chain: Cytochrome b (383 aa).

The next 4 membrane-spanning stretches (helical) occupy residues 32–52 (FGSL…FLAM), 76–98 (WLIR…CHIA), 113–133 (TWSI…LGYV), and 179–199 (FFSL…AHMI). Heme b-binding residues include H82 and H96. Residues H183 and H197 each coordinate heme b. H202 contributes to the a ubiquinone binding site. 4 helical membrane passes run 225–245 (FIFK…IFVC), 289–309 (LLGV…PLTD), 321–341 (LMKL…WIGA), and 348–368 (YLEV…FIVP).

This sequence belongs to the cytochrome b family. In terms of assembly, fungal cytochrome b-c1 complex contains 10 subunits; 3 respiratory subunits, 2 core proteins and 5 low-molecular weight proteins. Cytochrome b-c1 complex is a homodimer. Heme b serves as cofactor.

It localises to the mitochondrion inner membrane. In terms of biological role, component of the ubiquinol-cytochrome c reductase complex (complex III or cytochrome b-c1 complex) that is part of the mitochondrial respiratory chain. The b-c1 complex mediates electron transfer from ubiquinol to cytochrome c. Contributes to the generation of a proton gradient across the mitochondrial membrane that is then used for ATP synthesis. This chain is Cytochrome b (cob), found in Schizophyllum commune (Split gill fungus).